The chain runs to 33 residues: Cecropin-C (33 aa).

At Lys21 the chain carries 5-hydroxylysine.

As to quaternary structure, monomer. As to expression, hemolymph.

It is found in the secreted. Functionally, cecropins have lytic and antibacterial activity against several Gram-positive and Gram-negative bacteria. Also has activity against fungi. This chain is Cecropin-C, found in Heliothis virescens (Tobacco budworm moth).